Reading from the N-terminus, the 277-residue chain is Ethanolamine ammonia-lyase small subunit (277 aa).

The adenosylcob(III)alamin site is built by valine 164, glutamate 185, and cysteine 214.

Belongs to the EutC family. In terms of assembly, the basic unit is a heterodimer which dimerizes to form tetramers. The heterotetramers trimerize; 6 large subunits form a core ring with 6 small subunits projecting outwards. Adenosylcob(III)alamin serves as cofactor.

It localises to the bacterial microcompartment. The enzyme catalyses ethanolamine = acetaldehyde + NH4(+). It functions in the pathway amine and polyamine degradation; ethanolamine degradation. Functionally, catalyzes the deamination of various vicinal amino-alcohols to oxo compounds. Allows this organism to utilize ethanolamine as the sole source of nitrogen and carbon in the presence of external vitamin B12. The polypeptide is Ethanolamine ammonia-lyase small subunit (Pseudomonas fluorescens (strain SBW25)).